The chain runs to 111 residues: Universal stress protein B (111 aa).

Helical transmembrane passes span 1-21 and 90-110; these read MIST…NMAR and FILT…LILW.

This sequence belongs to the universal stress protein B family.

It localises to the cell inner membrane. The chain is Universal stress protein B from Yersinia enterocolitica serotype O:8 / biotype 1B (strain NCTC 13174 / 8081).